The primary structure comprises 214 residues: Orotate phosphoribosyltransferase (214 aa).

Residue lysine 26 participates in 5-phospho-alpha-D-ribose 1-diphosphate binding. 34–35 (FF) contacts orotate. 5-phospho-alpha-D-ribose 1-diphosphate is bound by residues 72–73 (YK), arginine 98, lysine 99, lysine 102, histidine 104, and 123–131 (DDVISAGTS). Orotate-binding residues include serine 127 and arginine 155.

It belongs to the purine/pyrimidine phosphoribosyltransferase family. PyrE subfamily. Homodimer. Requires Mg(2+) as cofactor.

It carries out the reaction orotidine 5'-phosphate + diphosphate = orotate + 5-phospho-alpha-D-ribose 1-diphosphate. Its pathway is pyrimidine metabolism; UMP biosynthesis via de novo pathway; UMP from orotate: step 1/2. In terms of biological role, catalyzes the transfer of a ribosyl phosphate group from 5-phosphoribose 1-diphosphate to orotate, leading to the formation of orotidine monophosphate (OMP). In Chromobacterium violaceum (strain ATCC 12472 / DSM 30191 / JCM 1249 / CCUG 213 / NBRC 12614 / NCIMB 9131 / NCTC 9757 / MK), this protein is Orotate phosphoribosyltransferase.